The chain runs to 363 residues: Spermidine/putrescine import ATP-binding protein PotA (363 aa).

The region spanning leucine 6–isoleucine 236 is the ABC transporter domain. Glycine 38 to threonine 45 is a binding site for ATP.

Belongs to the ABC transporter superfamily. Spermidine/putrescine importer (TC 3.A.1.11.1) family. The complex is composed of two ATP-binding proteins (PotA), two transmembrane proteins (PotB and PotC) and a solute-binding protein (PotD).

Its subcellular location is the cell inner membrane. The enzyme catalyses ATP + H2O + polyamine-[polyamine-binding protein]Side 1 = ADP + phosphate + polyamineSide 2 + [polyamine-binding protein]Side 1.. Its function is as follows. Part of the ABC transporter complex PotABCD involved in spermidine/putrescine import. Responsible for energy coupling to the transport system. This is Spermidine/putrescine import ATP-binding protein PotA from Pseudomonas aeruginosa (strain UCBPP-PA14).